The chain runs to 39 residues: Putative beta-neurotoxin (39 aa).

Residues 1–39 (GGKEGYPLNSSNGCKSGRFAGTNSNENTECKGXDAENGY) are disordered. One can recognise an LCN-type CS-alpha/beta domain in the interval 3-39 (KEGYPLNSSNGCKSGRFAGTNSNENTECKGXDAENGY). Over residues 28–39 (TECKGXDAENGY) the composition is skewed to basic and acidic residues.

The protein belongs to the long (4 C-C) scorpion toxin superfamily. Sodium channel inhibitor family. Beta subfamily. Expressed by the venom gland.

The protein resides in the secreted. Functionally, beta toxins bind voltage-independently at site-4 of sodium channels (Nav) and shift the voltage of activation toward more negative potentials thereby affecting sodium channel activation and promoting spontaneous and repetitive firing. The polypeptide is Putative beta-neurotoxin (Tityus pachyurus (Colombian scorpion)).